Reading from the N-terminus, the 420-residue chain is MSTSYSFLLAGRELDVFLSFSGKIALDVDFGYDLSRNGIKAFKSESWKESSFKPIDLRTLEALTESKVAVVMTSDEEVSSVGFLEELIVIIEFQEKRSLTVIPVFLTKHPLDVEKVSQIFPERAKIWRTAIAKLDNIAAQYSFSRNLAVMHGTHRIKQIADDIRLMFLSSASSDFKGLAGMDRHMKALYALLALESDEKVRTIGIWGSSGVGKTTLARYTYAEISVKFQAHVFLENVENMKEMLLPSENFEGEDLRSVNHEMNEMAEAKQKHRKVLLIADGVNNIEQGKWIAENANWFAPGSRVILITQEKSLLVQSGVNHVYEVGSLRYDEALQLFSRFAFKQPYPSPDFERLSVRAVQLAGFLPVTIRLFGSFLTGRDKEEWEATLLKLNAKQGKDIKEVWKIMEALEDKDIVEASQR.

In terms of domain architecture, TIR spans 12–167 (RELDVFLSFS…QIADDIRLMF (156 aa)). The active site involves glutamate 86. The region spanning 185–406 (MKALYALLAL…KDIKEVWKIM (222 aa)) is the NB-ARC domain.

In terms of tissue distribution, mostly expressed in leaves and flowers (mainly in sepals), and, at a lower intensity, in stems. Present at low levels in roots and seeds.

It is found in the cytoplasm. The protein localises to the nucleus. It catalyses the reaction NAD(+) + H2O = ADP-D-ribose + nicotinamide + H(+). Confers resistance to low temperatures by limiting chloroplast damage and cell death, thus maintaining growth homeostasis. Regulates steryl-esters and sterols accumulation. Limits leaf necrosis associated with virulent bacterial infection (e.g. Pseudomonas syringae pv. tomato DC3000). The protein is Disease resistance protein CHS1 of Arabidopsis thaliana (Mouse-ear cress).